The following is a 499-amino-acid chain: Ammonium transporter MEP2 (499 aa).

Residues 1–31 (MSYNFTGTPTGEGTGGNSLTTDLNTQFDLAN) are Extracellular-facing. N-linked (GlcNAc...) asparagine glycosylation occurs at Asn4. A helical membrane pass occupies residues 32 to 52 (MGWIGVASAGVWIMVPGIGLL). At 53-62 (YSGLSRKKHA) the chain is on the cytoplasmic side. The helical transmembrane segment at 63–83 (LSLLWASMMASAVCIFQWFFW) threads the bilayer. Residues 84-122 (GYSLAFSHNTRGNGFIGTLEFFGFRNVLGAPSSVSSLPD) lie on the Extracellular side of the membrane. Residues 123 to 143 (ILFAVYQGMFAAVTGALMLGG) form a helical membrane-spanning segment. Residues 144–152 (ACERARLFP) lie on the Cytoplasmic side of the membrane. Residues 153 to 173 (MMVFLFLWMTIVYCPIACWVW) traverse the membrane as a helical segment. Topologically, residues 174-187 (NAEGWLVKLGSLDY) are extracellular. The chain crosses the membrane as a helical span at residues 188-208 (AGGLCVHLTSGHGGLVYALIL). Over 209–230 (GKRNDPVTRKGMPKYKPHSVTS) the chain is Cytoplasmic. A helical transmembrane segment spans residues 231 to 251 (VVLGTVFLWFGWMFFNGGSAG). At 252–257 (NATIRA) the chain is on the extracellular side. The helical transmembrane segment at 258 to 278 (WYSIMSTNLAAACGGLTWMVI) threads the bilayer. At 279–289 (DYFRCGRKWTT) the chain is on the cytoplasmic side. A helical transmembrane segment spans residues 290–312 (VGLCSGIIAGLVGITPAAGFVPI). The Extracellular segment spans residues 313–315 (WSA). A helical membrane pass occupies residues 316-338 (VVIGVVTGAGCNLAVDLKSLLRI). Residues 339 to 346 (DDGLDCYS) lie on the Cytoplasmic side of the membrane. Residues 347–367 (IHGVGGCIGSVLTGIFAADYV) form a helical membrane-spanning segment. Over 368-393 (NATAGSYISPIDGGWINHHYKQVGYQ) the chain is Extracellular. The helical transmembrane segment at 394–414 (LAGICAALAWTVTVTSILLLT) threads the bilayer. Residues 415–499 (MNAIPFLKLR…SSTKNTDHIV (85 aa)) lie on the Cytoplasmic side of the membrane. Residues 428–441 (DEEELGTDAAQIGE) are enhancer domain. A linker domain region spans residues 442 to 449 (FTYEESTA). An autoinhibitory domain region spans residues 450–485 (YIPEPIRSKTSAQMPPPHENIDDKIVGNTDAEKNST). Positions 455–499 (IRSKTSAQMPPPHENIDDKIVGNTDAEKNSTPSDASSTKNTDHIV) are disordered. Ser457 carries the phosphoserine modification. A compositionally biased stretch (basic and acidic residues) spans 468-482 (ENIDDKIVGNTDAEK). Over residues 483–493 (NSTPSDASSTK) the composition is skewed to polar residues.

It belongs to the ammonia transporter channel (TC 1.A.11.2) family. Phosphorylated at Ser-457 by the TORC1 effector kinase NPR1 under nitrogen-limiting conditions which causes a conformational change in the C-terminal region (CTR) to form an open active conformation. Supplementation of nitrogen source leads to inactivation and instant Ser-457 dephosphorylation via plasma membrane PSR1 and PSR2 redundant phosphatases. Post-translationally, the residue Asn-4 of the protein's N-terminal tail is the only site that is glycosylated.

The protein resides in the cell membrane. Functionally, transporter for ammonium (both charged and uncharged NH3 and NH4) to use as a nitrogen source. The affinity of MEP2 is about twenty times higher than that of MEP1. MEP3 has the lowest affinity. Under ammonium limitation acts as an ammonium sensor, generating a signal that leads to pseudohyphal (filamentous) growth. This Saccharomyces cerevisiae (strain ATCC 204508 / S288c) (Baker's yeast) protein is Ammonium transporter MEP2.